The sequence spans 260 residues: Methyl-coenzyme M reductase subunit gamma (260 aa).

R123 contacts coenzyme M.

The protein belongs to the methyl-coenzyme M reductase gamma subunit family. As to quaternary structure, MCR is a hexamer of two alpha, two beta, and two gamma chains, forming a dimer of heterotrimers. Coenzyme F430 serves as cofactor.

The protein resides in the cytoplasm. It catalyses the reaction coenzyme B + methyl-coenzyme M = methane + coenzyme M-coenzyme B heterodisulfide. The protein operates within one-carbon metabolism; methyl-coenzyme M reduction; methane from methyl-coenzyme M: step 1/1. Functionally, component of the methyl-coenzyme M reductase (MCR) I that catalyzes the reductive cleavage of methyl-coenzyme M (CoM-S-CH3 or 2-(methylthio)ethanesulfonate) using coenzyme B (CoB or 7-mercaptoheptanoylthreonine phosphate) as reductant which results in the production of methane and the mixed heterodisulfide of CoB and CoM (CoM-S-S-CoB). This is the final step in methanogenesis. In Methanococcus vannielii, this protein is Methyl-coenzyme M reductase subunit gamma (mcrG).